The sequence spans 167 residues: MADEATRRVVSEIPVLKTNAGPRDRELWVQRLKEEYQSLIRYVENNKNADNDWFRLESNKEGTRWFGKCWYIHDLLKYEFDIEFDIPITYPTTAPEIAVPELDGKTAKMYRGGKICLTDHFKPLWARNVPKFGLAHLMALGLGPWLAVEIPDLIQKGVIQHKEKCSQ.

The Glycyl thioester intermediate role is filled by Cys116. A Glycyl lysine isopeptide (Lys-Gly) (interchain with G-Cter in UFM1) cross-link involves residue Lys122.

It belongs to the ubiquitin-conjugating enzyme family. UFC1 subfamily. In terms of assembly, interacts with UBA5 (via C-terminus). Interacts with UFL1. Interacts with UFM1. Interacts with KIRREL3. In terms of processing, ufmylated at Lys-122. Deufmylated by UFSP1.

Its function is as follows. E2-like enzyme which specifically catalyzes the second step in ufmylation. Accepts the ubiquitin-like modifier UFM1 from the E1 enzyme UBA5 and forms an intermediate with UFM1 via a thioester linkage. Ufmylation is involved in various processes, such as ribosome recycling, response to DNA damage, interferon response or reticulophagy (also called ER-phagy). In Bos taurus (Bovine), this protein is Ubiquitin-fold modifier-conjugating enzyme 1.